The following is a 274-amino-acid chain: Undecaprenyl-diphosphatase (274 aa).

The next 7 membrane-spanning stretches (helical) occupy residues 40-60 (PGAAFTAVIQIGTEVAVLMFF), 90-110 (WFIIVGSVPIVLLGIALKDVI), 114-134 (FRSLWLIGTTLIVLGLVLGVA), 147-167 (ISLRDAILMGLAQALALIPGV), 190-210 (YAFLLAIPAVIGAGVFELKDI), 221-241 (PTIVATIVSFVVGYAAIAWLL), and 252-272 (FVLYRVALGAATLVLVATGVI).

This sequence belongs to the UppP family.

The protein localises to the cell membrane. It carries out the reaction di-trans,octa-cis-undecaprenyl diphosphate + H2O = di-trans,octa-cis-undecaprenyl phosphate + phosphate + H(+). Functionally, catalyzes the dephosphorylation of undecaprenyl diphosphate (UPP). Confers resistance to bacitracin. The protein is Undecaprenyl-diphosphatase of Nocardioides sp. (strain ATCC BAA-499 / JS614).